Reading from the N-terminus, the 561-residue chain is Formate--tetrahydrofolate ligase (561 aa).

ATP is bound at residue 70-77 (TPAGEGKT).

The protein belongs to the formate--tetrahydrofolate ligase family.

The catalysed reaction is (6S)-5,6,7,8-tetrahydrofolate + formate + ATP = (6R)-10-formyltetrahydrofolate + ADP + phosphate. It participates in one-carbon metabolism; tetrahydrofolate interconversion. This chain is Formate--tetrahydrofolate ligase, found in Pelagibacter ubique (strain HTCC1062).